The following is a 172-amino-acid chain: Ribosome maturation factor RimM (172 aa).

A PRC barrel domain is found at 95 to 168; the sequence is AEGEFYYHQI…RVDVEIMEGL (74 aa).

Belongs to the RimM family. Binds ribosomal protein uS19.

The protein localises to the cytoplasm. An accessory protein needed during the final step in the assembly of 30S ribosomal subunit, possibly for assembly of the head region. Essential for efficient processing of 16S rRNA. May be needed both before and after RbfA during the maturation of 16S rRNA. It has affinity for free ribosomal 30S subunits but not for 70S ribosomes. The polypeptide is Ribosome maturation factor RimM (Streptococcus equi subsp. zooepidemicus (strain H70)).